Consider the following 633-residue polypeptide: Protein BZZ1 (633 aa).

Residues 5-271 (LSIGNEIKDS…VVKQNKPSLN (267 aa)) form the F-BAR domain. Residues 138–210 (DMVNKKDNIY…INQANRTKDK (73 aa)) are a coiled coil. Residues Ser327, Ser463, Ser472, and Ser476 each carry the phosphoserine modification. The segment at 429–495 (VDSKPSSGGS…KKTTQNSSDD (67 aa)) is disordered. The segment covering 474–493 (NNSIRTTSTNNTKKTTQNSS) has biased composition (low complexity). 2 SH3 domains span residues 493–555 (SDDG…ISSA) and 577–633 (LPVR…SYCK).

Belongs to the BZZ1 family. In terms of assembly, interacts with LAS17 and MYO5.

It localises to the cytoplasm. The protein resides in the cytoskeleton. It is found in the actin patch. In terms of biological role, plays a role in endocytosis and trafficking to the vacuole. Functions with type I myosins to restore polarity of the actin cytoskeleton after NaCl stress. The chain is Protein BZZ1 (BZZ1) from Saccharomyces cerevisiae (strain ATCC 204508 / S288c) (Baker's yeast).